The following is a 269-amino-acid chain: Tryptophan synthase alpha chain (269 aa).

Active-site proton acceptor residues include Glu41 and Asp52.

This sequence belongs to the TrpA family. Tetramer of two alpha and two beta chains.

The enzyme catalyses (1S,2R)-1-C-(indol-3-yl)glycerol 3-phosphate + L-serine = D-glyceraldehyde 3-phosphate + L-tryptophan + H2O. It participates in amino-acid biosynthesis; L-tryptophan biosynthesis; L-tryptophan from chorismate: step 5/5. Functionally, the alpha subunit is responsible for the aldol cleavage of indoleglycerol phosphate to indole and glyceraldehyde 3-phosphate. This Geobacillus stearothermophilus (Bacillus stearothermophilus) protein is Tryptophan synthase alpha chain.